A 137-amino-acid polypeptide reads, in one-letter code: Large ribosomal subunit protein uL16 (137 aa).

The segment covering 1–19 has biased composition (basic residues); the sequence is MLSPKKVKFRKQQRGRRTG. A disordered region spans residues 1–20; it reads MLSPKKVKFRKQQRGRRTGT.

This sequence belongs to the universal ribosomal protein uL16 family. Part of the 50S ribosomal subunit.

Functionally, binds 23S rRNA and is also seen to make contacts with the A and possibly P site tRNAs. The protein is Large ribosomal subunit protein uL16 of Desulfosudis oleivorans (strain DSM 6200 / JCM 39069 / Hxd3) (Desulfococcus oleovorans).